The chain runs to 197 residues: DNA-directed RNA polymerases I, II, and III subunit rpabc1 (197 aa).

Belongs to the archaeal Rpo5/eukaryotic RPB5 RNA polymerase subunit family. In terms of assembly, component of the RNA polymerase I (Pol I), RNA polymerase II (Pol II) and RNA polymerase III (Pol III) complexes consisting of at least 13, 12 and 17 subunits, respectively. In RNA Pol II, this subunit is present in 2-fold molar excess over the other subunits.

Its subcellular location is the nucleus. Functionally, DNA-dependent RNA polymerase catalyzes the transcription of DNA into RNA using the four ribonucleoside triphosphates as substrates. Common component of RNA polymerases I, II and III which synthesize ribosomal RNA precursors, mRNA precursors and many functional non-coding RNAs, and small RNAs, such as 5S rRNA and tRNAs, respectively. Pol II is the central component of the basal RNA polymerase II transcription machinery. Pols are composed of mobile elements that move relative to each other. In Pol II, RPB5 is part of the lower jaw surrounding the central large cleft and thought to grab the incoming DNA template. Seems to be the major component in this process. This chain is DNA-directed RNA polymerases I, II, and III subunit rpabc1 (polr2e), found in Dictyostelium discoideum (Social amoeba).